Consider the following 684-residue polypeptide: Threonine--tRNA ligase (684 aa).

The 66-residue stretch at 1–66 (MTVPATDSCP…DTDAEVVPVA (66 aa)) folds into the TGS domain. The tract at residues 261-567 (DHRKLGSELD…LTEHYAGAFP (307 aa)) is catalytic. Positions 366, 417, and 544 each coordinate Zn(2+).

Belongs to the class-II aminoacyl-tRNA synthetase family. Homodimer. It depends on Zn(2+) as a cofactor.

It localises to the cytoplasm. The enzyme catalyses tRNA(Thr) + L-threonine + ATP = L-threonyl-tRNA(Thr) + AMP + diphosphate + H(+). Its function is as follows. Catalyzes the attachment of threonine to tRNA(Thr) in a two-step reaction: L-threonine is first activated by ATP to form Thr-AMP and then transferred to the acceptor end of tRNA(Thr). Also edits incorrectly charged L-seryl-tRNA(Thr). The chain is Threonine--tRNA ligase from Mycolicibacterium paratuberculosis (strain ATCC BAA-968 / K-10) (Mycobacterium paratuberculosis).